We begin with the raw amino-acid sequence, 440 residues long: Transposon Ty1-DR2 Gag polyprotein (440 aa).

Composition is skewed to polar residues over residues 1 to 31 and 137 to 168; these read MESQ…TTQD and VGTH…TNQH. Disordered stretches follow at residues 1 to 75, 137 to 174, and 350 to 440; these read MESQ…PQAA, VGTH…PPPI, and QQES…PGTY. The interval 299 to 401 is RNA-binding; that stretch reads NNGIPINNKV…NSQSRTARAH (103 aa). Over residues 363–372 the composition is skewed to basic and acidic residues; it reads SPSDEKKDSR. Over residues 373-409 the composition is skewed to polar residues; that stretch reads TYTNTTKPKSITRNSQKPNNSQSRTARAHNVSTSNNF. Over residues 429-440 the composition is skewed to basic and acidic residues; that stretch reads NKHDLHLRPGTY.

Homotrimer.

The protein localises to the cytoplasm. In terms of biological role, capsid protein (CA) is the structural component of the virus-like particle (VLP), forming the shell that encapsulates the retrotransposons dimeric RNA genome. The particles are assembled from trimer-clustered units and there are holes in the capsid shells that allow for the diffusion of macromolecules. CA also has nucleocapsid-like chaperone activity, promoting primer tRNA(i)-Met annealing to the multipartite primer-binding site (PBS), dimerization of Ty1 RNA and initiation of reverse transcription. The chain is Transposon Ty1-DR2 Gag polyprotein (TY1A-DR2) from Saccharomyces cerevisiae (strain ATCC 204508 / S288c) (Baker's yeast).